Here is a 170-residue protein sequence, read N- to C-terminus: Disulfide bond formation protein B 1 (170 aa).

Residues 1 to 14 (MNDYTLAIRRERRL) lie on the Cytoplasmic side of the membrane. A helical membrane pass occupies residues 15-31 (LMLLGWVCIALLAGALY). At 32–49 (LQYVKNEDPCPLCIIQRY) the chain is on the periplasmic side. An intrachain disulfide couples Cys-41 to Cys-44. A helical transmembrane segment spans residues 50 to 64 (FFCAIGIFAFLAAGI). Topologically, residues 65-71 (RNWRGVW) are cytoplasmic. The helical transmembrane segment at 72–89 (VLELLIAIAAAGGVGTAA) threads the bilayer. Topologically, residues 90–144 (RHLTIQMNPGFSCGFDTLQPIVDSLPPAQWFPGMFKVAGLCETVYPPIFGILLPG) are periplasmic. Residues Cys-102 and Cys-130 are joined by a disulfide bond. A helical membrane pass occupies residues 145–163 (WSLIGFAVILIAVVASLWR). Residues 164–170 (HRRKLVG) are Cytoplasmic-facing.

Belongs to the DsbB family.

It localises to the cell inner membrane. In terms of biological role, required for disulfide bond formation in some periplasmic proteins. Acts by oxidizing the DsbA protein. The chain is Disulfide bond formation protein B 1 from Burkholderia lata (strain ATCC 17760 / DSM 23089 / LMG 22485 / NCIMB 9086 / R18194 / 383).